The chain runs to 248 residues: Probable transcriptional regulatory protein RPE_4771 (248 aa).

The disordered stretch occupies residues 1–21 (MAGHSQFKNIMHRKGRQDAQK).

It belongs to the TACO1 family.

The protein resides in the cytoplasm. This Rhodopseudomonas palustris (strain BisA53) protein is Probable transcriptional regulatory protein RPE_4771.